The primary structure comprises 652 residues: Sodium-dependent nutrient amino acid transporter 1 (652 aa).

Positions 1–54 (MELKGVHQQNGTSNGTGAVGAEGESAPPTAPATAEAAASLETTTEKVDAEQQKP) are disordered. Topologically, residues 1 to 58 (MELKGVHQQNGTSNGTGAVGAEGESAPPTAPATAEAAASLETTTEKVDAEQQKPERTN) are cytoplasmic. A compositionally biased stretch (polar residues) spans 7-16 (HQQNGTSNGT). Residues 21–42 (AEGESAPPTAPATAEAAASLET) are compositionally biased toward low complexity. A compositionally biased stretch (basic and acidic residues) spans 43 to 54 (TTEKVDAEQQKP). Transmembrane regions (helical) follow at residues 59-79 (WGNGLEFLMSCISVSVGLGNV), 92-112 (GAFLIPYIIVLFLIGKPMYYL), 130-150 (VVPGFVGVGYGQAFATICIIT), and 155-175 (LLALTLYYLFVSFQSVLPWSY). N-linked (GlcNAc...) asparagine glycans are attached at residues Asn-201 and Asn-204. Helical transmembrane passes span 240-260 (PDWKLTLALFVSWVVIFLVIM), 269-289 (AAYFLALFPYVVLFILLVRAV), 318-338 (AVVQCFFSLAVGSGPIIMFAS), 352-372 (IVTTLDTLTSLLGGITIFAIL), 412-432 (LFSVLFFFMLFVLGIGSIVAL), 458-478 (ICGFLMGLVYVTPGGQWILTL), 485-505 (TYVVFILAIFELAGIVWIYGM), 527-547 (CWSFFTPVMMIVIFIYSMVTI), and 564-584 (AGWLLFGIGAAQFPLWWMWYI).

This sequence belongs to the sodium:neurotransmitter symporter (SNF) (TC 2.A.22) family.

It is found in the membrane. In terms of biological role, unusual broad substrate spectrum amino acid:sodium cotransporter that promotes absorption of the D isomers of essential amino acids. Neutral amino acids are the preferred substrates, especially methionine and phenylalanine. This Drosophila persimilis (Fruit fly) protein is Sodium-dependent nutrient amino acid transporter 1.